The chain runs to 386 residues: MAEIPTSSNPSDDPETQKLNGNEEDYDHHHDEDPESDDENYEYALQIAEMLPFPMVMKTAIELDLLGIIATAGPDRQLSAAEIAAALPAAGNPDAPAMLDRMLYLLATYSVVTCTAVDGGASGGVVRKYGLAPVAKYFVSNEDGVSLGALISLNQGQAFLASWSKLKEAVLEGGIPFNKVHGMDVFHYQGTDPRFNEIFNKAMYDQSTYIIKKIVRRYKGFENIQRLVDVGGGLGHTLRVITSNYPSIKGINFDLPHVIQHAPTIPGVEHVGGDMFESIPNGDAIFMKCILHDWSDEHCLKILKNCYKALPRKGKVIVVEMNMIEEPQTTPLAKAISQLDVCMMTQSPGGKERTRREFQTLAEAAGFAEFNPVCHVAGFWVMEFLK.

Residues Ser207, Gly231, Asp254, Asp274, and Lys288 each coordinate S-adenosyl-L-homocysteine. Residue Asp254 participates in S-adenosyl-L-methionine binding. His292 acts as the Proton acceptor in catalysis.

It belongs to the class I-like SAM-binding methyltransferase superfamily. Cation-independent O-methyltransferase family. In terms of assembly, homodimer.

It catalyses the reaction dopamine + S-adenosyl-L-methionine = 4-methoxytyramine + S-adenosyl-L-homocysteine + H(+). The enzyme catalyses 3,4-dihydroxy-5-methoxyphenethylamine + S-adenosyl-L-methionine = 3-hydroxy-4,5-dimethoxyphenethylamine + S-adenosyl-L-homocysteine + H(+). The catalysed reaction is 3-hydroxy-4,5-dimethoxyphenethylamine + S-adenosyl-L-methionine = mescaline + S-adenosyl-L-homocysteine + H(+). It carries out the reaction 4-hydroxy-3,5-dimethoxyphenethylamine + S-adenosyl-L-methionine = mescaline + S-adenosyl-L-homocysteine + H(+). It functions in the pathway aromatic compound metabolism. It participates in alkaloid biosynthesis. In terms of biological role, O-methyltransferase participating in the biosynthesis of natural products derived from phenylethylamine, including mescaline, a natural hallucinogen potentially used in psychotherapeutic treatments. Catalyzes the O-methylation of mescaline para hydroxyl groups, using dopamine, 3,4-dihydroxy-5-methoxyphenethylamine, 3-hydroxy-4,5-dimethoxyphenethylamine and 4-hydroxy-3,5-dimethoxyphenethylamine as substrates. The sequence is that of O-methyltransferase 11 from Lophophora williamsii (Peyote).